Consider the following 245-residue polypeptide: uncharacterized protein (245 aa).

Helical transmembrane passes span 38 to 58, 68 to 88, 100 to 120, 129 to 149, 194 to 214, and 217 to 237; these read IYPA…AIFI, TIEL…QGYF, IWSL…LILA, VLFI…FVSA, VNNI…FLMN, and IAFI…LIIH.

Belongs to the acyltransferase 3 family.

It is found in the cell membrane. This is an uncharacterized protein from Haemophilus influenzae (strain ATCC 51907 / DSM 11121 / KW20 / Rd).